The following is a 269-amino-acid chain: 3-methyl-2-oxobutanoate hydroxymethyltransferase (269 aa).

2 residues coordinate Mg(2+): Asp-46 and Asp-85. 3-methyl-2-oxobutanoate is bound by residues 46-47 (DS), Asp-85, and Lys-114. Glu-116 provides a ligand contact to Mg(2+). The active-site Proton acceptor is Glu-183.

This sequence belongs to the PanB family. As to quaternary structure, homodecamer; pentamer of dimers. It depends on Mg(2+) as a cofactor.

Its subcellular location is the cytoplasm. The catalysed reaction is 3-methyl-2-oxobutanoate + (6R)-5,10-methylene-5,6,7,8-tetrahydrofolate + H2O = 2-dehydropantoate + (6S)-5,6,7,8-tetrahydrofolate. It functions in the pathway cofactor biosynthesis; (R)-pantothenate biosynthesis; (R)-pantoate from 3-methyl-2-oxobutanoate: step 1/2. Catalyzes the reversible reaction in which hydroxymethyl group from 5,10-methylenetetrahydrofolate is transferred onto alpha-ketoisovalerate to form ketopantoate. The chain is 3-methyl-2-oxobutanoate hydroxymethyltransferase from Methylococcus capsulatus (strain ATCC 33009 / NCIMB 11132 / Bath).